The following is a 453-amino-acid chain: Pup--protein ligase (453 aa).

Glu-9 is a Mg(2+) binding site. An ATP-binding site is contributed by Arg-53. Tyr-55 lines the Mg(2+) pocket. Catalysis depends on Asp-57, which acts as the Proton acceptor. Glu-63 contributes to the Mg(2+) binding site. ATP contacts are provided by Thr-66 and Trp-420.

This sequence belongs to the Pup ligase/Pup deamidase family. Pup-conjugating enzyme subfamily.

The enzyme catalyses ATP + [prokaryotic ubiquitin-like protein]-L-glutamate + [protein]-L-lysine = ADP + phosphate + N(6)-([prokaryotic ubiquitin-like protein]-gamma-L-glutamyl)-[protein]-L-lysine.. The protein operates within protein degradation; proteasomal Pup-dependent pathway. Its pathway is protein modification; protein pupylation. In terms of biological role, catalyzes the covalent attachment of the prokaryotic ubiquitin-like protein modifier Pup to the proteasomal substrate proteins, thereby targeting them for proteasomal degradation. This tagging system is termed pupylation. The ligation reaction involves the side-chain carboxylate of the C-terminal glutamate of Pup and the side-chain amino group of a substrate lysine. This is Pup--protein ligase from Streptomyces coelicolor (strain ATCC BAA-471 / A3(2) / M145).